We begin with the raw amino-acid sequence, 377 residues long: UPF0754 membrane protein lin2327 (377 aa).

Helical transmembrane passes span 1 to 21 and 357 to 377; these read MSVL…GAMT and YLGG…AMWI.

Belongs to the UPF0754 family.

The protein localises to the cell membrane. The polypeptide is UPF0754 membrane protein lin2327 (Listeria innocua serovar 6a (strain ATCC BAA-680 / CLIP 11262)).